The following is a 330-amino-acid chain: Phosphate acyltransferase (330 aa).

It belongs to the PlsX family. Homodimer. Probably interacts with PlsY.

Its subcellular location is the cytoplasm. It catalyses the reaction a fatty acyl-[ACP] + phosphate = an acyl phosphate + holo-[ACP]. It participates in lipid metabolism; phospholipid metabolism. Catalyzes the reversible formation of acyl-phosphate (acyl-PO(4)) from acyl-[acyl-carrier-protein] (acyl-ACP). This enzyme utilizes acyl-ACP as fatty acyl donor, but not acyl-CoA. This is Phosphate acyltransferase from Bacillus cereus (strain AH820).